Consider the following 161-residue polypeptide: Efficient mitochondria targeting-associated protein 19 (161 aa).

Topologically, residues 1–10 are cytoplasmic; that stretch reads MKLGHREQQF. The region spanning 7 to 159 is the EXPERA domain; the sequence is EQQFYLWYFI…PTFLIPLRLC (153 aa). The chain crosses the membrane as a helical span at residues 11–31; it reads YLWYFIVHIPITIFIDSSVVI. The Lumenal segment spans residues 32-61; that stretch reads PAKWQLGIAQKVVSDHIAKQHDFLLSEKPE. A helical transmembrane segment spans residues 62-82; sequence WLYWFVVLELVLQLPLFVYFV. The Cytoplasmic segment spans residues 83–101; the sequence is NKFWNSSELQVNTNSRLKK. Residues 102–122 traverse the membrane as a helical segment; that stretch reads WLRIYGWNASLTTLICIVVIF. The Lumenal portion of the chain corresponds to 123–141; sequence KRGYIPYDVLKTSLSMTQK. A helical transmembrane segment spans residues 142–160; sequence CQLASVYLPTFLIPLRLCF. A topological domain (cytoplasmic) is located at residue V161.

This sequence belongs to the TMEM97/sigma-2 receptor family.

It is found in the endoplasmic reticulum membrane. Its function is as follows. Part of an import route for newly synthesized mitochondrial proteins termed the ER-SURF pathway (ER surface-mediated protein targeting), which retrieves mitochondrial precursor proteins from the ER surface and reroutes them to mitochondria for efficient mitochondrial import. Acts as a quality control factor in the ER, promoting the proteolytic degradation of nonproductive and extramitochondrial precursor proteins in the ER membrane thus removing them from the ER surface. The sequence is that of Efficient mitochondria targeting-associated protein 19 from Saccharomyces cerevisiae (strain ATCC 204508 / S288c) (Baker's yeast).